Reading from the N-terminus, the 554-residue chain is (+)-delta-cadinene synthase isozyme XC14 (554 aa).

The segment covering 1–16 (MASQVSQMPSSSPLSS) has biased composition (low complexity). The interval 1-23 (MASQVSQMPSSSPLSSNKDEMRP) is disordered. Residues D307, D311, and D451 each coordinate Mg(2+). The short motif at 307–311 (DDTYD) is the DDXXD motif element.

This sequence belongs to the terpene synthase family. Mg(2+) serves as cofactor.

It catalyses the reaction (2E,6E)-farnesyl diphosphate = (1S,8aR)-delta-cadinene + diphosphate. Its pathway is secondary metabolite biosynthesis; terpenoid biosynthesis. Responsible for the cyclization of trans,trans-farnesyl diphosphate (FPP) to (+)-delta cadinene. The sequence is that of (+)-delta-cadinene synthase isozyme XC14 from Gossypium arboreum (Tree cotton).